The following is a 588-amino-acid chain: Phosphomethylpyrimidine synthase (588 aa).

Substrate contacts are provided by residues Asn-212, Met-241, Tyr-270, His-306, 326 to 328 (SRG), 367 to 370 (DGLR), and Glu-406. Zn(2+) is bound at residue His-410. Tyr-433 is a substrate binding site. His-474 provides a ligand contact to Zn(2+). [4Fe-4S] cluster-binding residues include Cys-554, Cys-557, and Cys-562.

The protein belongs to the ThiC family. Homodimer. It depends on [4Fe-4S] cluster as a cofactor.

The catalysed reaction is 5-amino-1-(5-phospho-beta-D-ribosyl)imidazole + S-adenosyl-L-methionine = 4-amino-2-methyl-5-(phosphooxymethyl)pyrimidine + CO + 5'-deoxyadenosine + formate + L-methionine + 3 H(+). It functions in the pathway cofactor biosynthesis; thiamine diphosphate biosynthesis. Its function is as follows. Catalyzes the synthesis of the hydroxymethylpyrimidine phosphate (HMP-P) moiety of thiamine from aminoimidazole ribotide (AIR) in a radical S-adenosyl-L-methionine (SAM)-dependent reaction. The sequence is that of Phosphomethylpyrimidine synthase from Bartonella quintana (strain Toulouse) (Rochalimaea quintana).